A 221-amino-acid chain; its full sequence is 7-cyano-7-deazaguanine synthase (221 aa).

Position 7–17 (7–17 (LSGGMDSSTLA)) interacts with ATP. Zn(2+) is bound by residues C187, C195, C198, and C201.

The protein belongs to the QueC family. Zn(2+) is required as a cofactor.

The enzyme catalyses 7-carboxy-7-deazaguanine + NH4(+) + ATP = 7-cyano-7-deazaguanine + ADP + phosphate + H2O + H(+). It functions in the pathway purine metabolism; 7-cyano-7-deazaguanine biosynthesis. In terms of biological role, catalyzes the ATP-dependent conversion of 7-carboxy-7-deazaguanine (CDG) to 7-cyano-7-deazaguanine (preQ(0)). This chain is 7-cyano-7-deazaguanine synthase, found in Methanosphaerula palustris (strain ATCC BAA-1556 / DSM 19958 / E1-9c).